The sequence spans 425 residues: GTPase Obg (425 aa).

Positions 1 to 158 (MFVDQVKVYV…RYIVMELKLI (158 aa)) constitute an Obg domain. The interval 118–144 (KGGRGGRGNNRFANSSNPAPHISENGE) is disordered. Residues 159 to 327 (ADVGLVGYPS…LMYAIGDTLA (169 aa)) form the OBG-type G domain. ATP is bound by residues 165–172 (GYPSVGKS), 190–194 (FTTLT), 211–214 (DLPG), 281–284 (NKME), and 308–310 (SAA). Mg(2+) contacts are provided by S172 and T192. The OCT domain occupies 348 to 425 (RAEKEPDAFE…IGKLEFDFVE (78 aa)).

The protein belongs to the TRAFAC class OBG-HflX-like GTPase superfamily. OBG GTPase family. In terms of assembly, monomer. Mg(2+) is required as a cofactor.

It localises to the cytoplasm. Functionally, an essential GTPase which binds GTP, GDP and possibly (p)ppGpp with moderate affinity, with high nucleotide exchange rates and a fairly low GTP hydrolysis rate. Plays a role in control of the cell cycle, stress response, ribosome biogenesis and in those bacteria that undergo differentiation, in morphogenesis control. In Brevibacillus brevis (strain 47 / JCM 6285 / NBRC 100599), this protein is GTPase Obg.